Consider the following 175-residue polypeptide: General stress protein 14 (175 aa).

It belongs to the NAD(P)H dehydrogenase (quinone) family.

The chain is General stress protein 14 (ywrO) from Bacillus subtilis (strain 168).